A 541-amino-acid polypeptide reads, in one-letter code: Cytochrome P450 67 (541 aa).

Residue Cys479 coordinates heme.

The protein belongs to the cytochrome P450 family. The cofactor is heme.

The sequence is that of Cytochrome P450 67 (CYP67) from Uromyces fabae (Rust fungus).